An 873-amino-acid polypeptide reads, in one-letter code: MKYLSPLSLSDTQLNITELKQQLTLFSQYQINAFHQHKAVSDLVLERSHYFDQLLSRLWQFFKFDDIANTSLIAVGGYGRSELHPLSDIDILILTENNTNDAFCQKVGELVTLLWDLKLEVGHSVRSIAECIEIGQNDLTVATNLQEARYISGNKELSHQLKLKIHSDSFWPSELFYQAKIDEQKKRHSRYHDTTYNLEPDIKSSPGGLRDIHTLSWIARRHFGATSLLEMSQAGFLTDAEYRELLECQEFLWRVRFALHIELKRYDNRLTFGHQASVAEHLGFIGEGNRGVERMMKEFYRTLRRVAELNSMLLKIFDQAILHQGEQDDAIIIDDDFQRRGRLIEARKPALFQARPDTILDMFLLMANDSTIDGVAPPTMRQLRTARRRLNRFLCEIPEAKEKFLQLTQHPNALNNAFSSMHKLGVLSAYLPQWSHIVGQMQFDLFHAYTVDEHSIRLLKHINKFSDTTNRDKHPICCEIFPKIMKKELLIIAAIFHDIAKGRGGDHSELGAVDAYDFCISHGLSKPEANLVSWLVKSHLLMSVTAQRRDIYDPDVITEFAKQVRDEERLDYLVCLTVADICATNPDLWNSWKRSLIADLYNATQRALRRGLENPPDLRDRIRHNQQMASAQLRSEGFTQWEVDALWRRFKADYFLRHTHKQIAWHASHLLRHQDKEKSLILISKNASRGGTEIFVYSKDQPHLFATVAAELDRRSITIYDAQVMSSKDGYALDTFMVLDQNDDPIDEERQQRLIDQLYDVKLNDQATHIKTRRPPRQLQHFNVKTRMEFLPTKTGKRTLMEFVALDTPGLLATVGATFAQLGINLHAAKITTIGERAEDLFILTSDVGGRLDDEKQAELELALVKNVARLSS.

Positions methionine 1–isoleucine 332 are uridylyltransferase. Residues isoleucine 333–threonine 692 are uridylyl-removing. Residues valine 451–leucine 573 form the HD domain. ACT domains are found at residues glutamate 693 to arginine 777 and leucine 800 to serine 873.

The protein belongs to the GlnD family. The cofactor is Mg(2+).

The enzyme catalyses [protein-PII]-L-tyrosine + UTP = [protein-PII]-uridylyl-L-tyrosine + diphosphate. It carries out the reaction [protein-PII]-uridylyl-L-tyrosine + H2O = [protein-PII]-L-tyrosine + UMP + H(+). Uridylyltransferase (UTase) activity is inhibited by glutamine, while glutamine activates uridylyl-removing (UR) activity. In terms of biological role, modifies, by uridylylation and deuridylylation, the PII regulatory proteins (GlnB and homologs), in response to the nitrogen status of the cell that GlnD senses through the glutamine level. Under low glutamine levels, catalyzes the conversion of the PII proteins and UTP to PII-UMP and PPi, while under higher glutamine levels, GlnD hydrolyzes PII-UMP to PII and UMP (deuridylylation). Thus, controls uridylylation state and activity of the PII proteins, and plays an important role in the regulation of nitrogen assimilation and metabolism. The chain is Bifunctional uridylyltransferase/uridylyl-removing enzyme from Aliivibrio fischeri (strain ATCC 700601 / ES114) (Vibrio fischeri).